Consider the following 24-residue polypeptide: Lactadherin (24 aa).

It is found in the membrane. Its subcellular location is the secreted. The protein resides in the cytoplasmic vesicle. It localises to the secretory vesicle. The protein localises to the acrosome membrane. Functionally, specific ligand for the alpha-v/beta-3 and alpha-v/beta-5 receptors. Also binds to phosphatidylserine-enriched cell surfaces in a receptor-independent manner. Zona pellucida-binding protein which may play a role in gamete interaction. Contributes to phagocytic removal of apoptotic cells in many tissues. Plays an important role in the maintenance of intestinal epithelial homeostasis and the promotion of mucosal healing. Promotes VEGF-dependent neovascularization. This chain is Lactadherin, found in Equus asinus (Donkey).